The primary structure comprises 429 residues: Adenylosuccinate synthetase (429 aa).

GTP is bound by residues 12-18 and 40-42; these read GDEGKGK and GHT. Asp13 serves as the catalytic Proton acceptor. The Mg(2+) site is built by Asp13 and Gly40. Residues 13 to 16, 38 to 41, Thr130, Arg144, Gln225, Thr240, and Arg304 contribute to the IMP site; these read DEGK and NAGH. His41 serves as the catalytic Proton donor. Substrate is bound at residue 300 to 306; the sequence is ATTGRPR. Residues Arg306, 332–334, and 414–416 each bind GTP; these read KLD and SVG.

It belongs to the adenylosuccinate synthetase family. In terms of assembly, homodimer. Mg(2+) serves as cofactor.

The protein localises to the cytoplasm. The enzyme catalyses IMP + L-aspartate + GTP = N(6)-(1,2-dicarboxyethyl)-AMP + GDP + phosphate + 2 H(+). Its pathway is purine metabolism; AMP biosynthesis via de novo pathway; AMP from IMP: step 1/2. Functionally, plays an important role in the de novo pathway of purine nucleotide biosynthesis. Catalyzes the first committed step in the biosynthesis of AMP from IMP. This chain is Adenylosuccinate synthetase, found in Syntrophobacter fumaroxidans (strain DSM 10017 / MPOB).